The primary structure comprises 290 residues: Phosphatidylglycerol--prolipoprotein diacylglyceryl transferase (290 aa).

Transmembrane regions (helical) follow at residues 21 to 41 (VSLH…MWLA), 60 to 80 (LLYA…VLFY), 96 to 116 (WDGG…MLWF), 124 to 144 (FFQV…AGRL), 199 to 219 (SQLY…NLFI), 226 to 246 (GSVS…VECF), and 259 to 279 (VISM…IMMI). Arginine 143 lines the a 1,2-diacyl-sn-glycero-3-phospho-(1'-sn-glycerol) pocket.

The protein belongs to the Lgt family.

Its subcellular location is the cell inner membrane. It carries out the reaction L-cysteinyl-[prolipoprotein] + a 1,2-diacyl-sn-glycero-3-phospho-(1'-sn-glycerol) = an S-1,2-diacyl-sn-glyceryl-L-cysteinyl-[prolipoprotein] + sn-glycerol 1-phosphate + H(+). It functions in the pathway protein modification; lipoprotein biosynthesis (diacylglyceryl transfer). Catalyzes the transfer of the diacylglyceryl group from phosphatidylglycerol to the sulfhydryl group of the N-terminal cysteine of a prolipoprotein, the first step in the formation of mature lipoproteins. This chain is Phosphatidylglycerol--prolipoprotein diacylglyceryl transferase, found in Yersinia enterocolitica serotype O:8 / biotype 1B (strain NCTC 13174 / 8081).